The sequence spans 477 residues: UDP-glycosyltransferase 71K1 (477 aa).

Residues Ser285, 350–351 (WA), 368–376 (HCGWNSILE), and 390–393 (YAEQ) each bind UDP-alpha-D-glucose.

Belongs to the UDP-glycosyltransferase family.

Glycosyltransferase that possesses chalcone and flavonol 2'-O-glycosyltransferase activity. Converts phloretin to phlorizin (phloretin 2'-O-glucoside), a potent antioxidant. Possesses glycosyltransferase activity toward quercetin, isoliquiritigenin, butein and caffeic acid. The polypeptide is UDP-glycosyltransferase 71K1 (Malus domestica (Apple)).